A 60-amino-acid polypeptide reads, in one-letter code: Large ribosomal subunit protein uL30 (60 aa).

Belongs to the universal ribosomal protein uL30 family. As to quaternary structure, part of the 50S ribosomal subunit.

The chain is Large ribosomal subunit protein uL30 from Cupriavidus metallidurans (strain ATCC 43123 / DSM 2839 / NBRC 102507 / CH34) (Ralstonia metallidurans).